The primary structure comprises 346 residues: Putative [LysW]-L-2-aminoadipate/[LysW]-L-glutamate phosphate reductase (346 aa).

An NADP(+)-binding site is contributed by 12 to 15 (SGFT). The active site involves C147. Residues 178–198 (GSSEGGAGGGDASSHPERSGV) are disordered. An NADP(+)-binding site is contributed by N310.

The protein belongs to the NAGSA dehydrogenase family. Type 1 subfamily. LysY sub-subfamily.

It localises to the cytoplasm. It catalyses the reaction [amino-group carrier protein]-C-terminal-N-(1-carboxy-5-oxopentan-1-yl)-L-glutamine + phosphate + NADP(+) = [amino-group carrier protein]-C-terminal-N-(1-carboxy-5-phosphooxy-5-oxopentan-1-yl)-L-glutamine + NADPH + H(+). The catalysed reaction is [amino-group carrier protein]-C-terminal-gamma-(L-glutamyl-5-semialdehyde)-L-glutamate + phosphate + NADP(+) = [amino-group carrier protein]-C-terminal-gamma-(5-phospho-L-glutamyl)-L-glutamate + NADPH + H(+). Its pathway is amino-acid biosynthesis; L-lysine biosynthesis via AAA pathway; L-lysine from L-alpha-aminoadipate (Thermus route): step 3/5. It participates in amino-acid biosynthesis; L-arginine biosynthesis. Involved in both the arginine and lysine biosynthetic pathways. This is Putative [LysW]-L-2-aminoadipate/[LysW]-L-glutamate phosphate reductase from Haloquadratum walsbyi (strain DSM 16790 / HBSQ001).